A 214-amino-acid chain; its full sequence is uncharacterized protein (214 aa).

Positions M1–G17 are cleaved as a signal peptide. C18 carries the N-palmitoyl cysteine lipid modification. The S-diacylglycerol cysteine moiety is linked to residue C18. A compositionally biased stretch (acidic residues) spans D64–D77. Disordered stretches follow at residues D64–E83, Y106–K138, and T166–K197. Residues T120–C162 adopt a coiled-coil conformation.

The protein localises to the cell membrane. This is an uncharacterized protein from Rickettsia bellii (strain RML369-C).